A 154-amino-acid chain; its full sequence is Large ribosomal subunit protein uL22c (154 aa).

Belongs to the universal ribosomal protein uL22 family. As to quaternary structure, part of the 50S ribosomal subunit.

It is found in the plastid. Its subcellular location is the chloroplast. In terms of biological role, this protein binds specifically to 23S rRNA. Functionally, the globular domain of the protein is located near the polypeptide exit tunnel on the outside of the subunit, while an extended beta-hairpin is found that lines the wall of the exit tunnel in the center of the 70S ribosome. In Helianthus annuus (Common sunflower), this protein is Large ribosomal subunit protein uL22c (rpl22).